We begin with the raw amino-acid sequence, 294 residues long: Elongation factor Ts (294 aa).

Residues threonine 81–valine 84 form an involved in Mg(2+) ion dislocation from EF-Tu region.

This sequence belongs to the EF-Ts family.

It localises to the cytoplasm. Associates with the EF-Tu.GDP complex and induces the exchange of GDP to GTP. It remains bound to the aminoacyl-tRNA.EF-Tu.GTP complex up to the GTP hydrolysis stage on the ribosome. The polypeptide is Elongation factor Ts (Lawsonia intracellularis (strain PHE/MN1-00)).